A 239-amino-acid chain; its full sequence is Diablo IAP-binding mitochondrial protein (239 aa).

The N-terminal 22 residues, methionine 1–leucine 22, are a transit peptide targeting the mitochondrion. Positions alanine 56–alanine 60 match the IAP-binding motif. The disordered stretch occupies residues arginine 217–aspartate 239.

This sequence belongs to the Smac/DIABLO protein family. Homodimer. Interacts with BEX3. Interacts with BIRC2/c-IAP1 (via BIR3 domain). Interacts with BIRC6/BRUCE. Interacts with BIRC7/livin. Interacts with XIAP/BIRC4 (via BIR3 domain). Interacts with the monomeric and dimeric form of BIRC5/survivin. Interacts with AREL1 (via HECT domain); in the cytoplasm following induction of apoptosis. Ubiquitinated by BIRC7/livin. Ubiquitinated by BIRC6. Post-translationally, the precursor form is proteolytically cleaved by mitochondrial processing peptidase MPP to remove the transit peptide and produce an intermediate form. This is then processed by PARL to produce the mature cleaved form which is released from mitochondria into the cytosol in apoptotic cells.

It localises to the mitochondrion. Its subcellular location is the cytoplasm. The protein localises to the cytosol. In terms of biological role, promotes apoptosis by activating caspases in the cytochrome c/Apaf-1/caspase-9 pathway. Acts by opposing the inhibitory activity of inhibitor of apoptosis proteins (IAP). Inhibits the activity of BIRC6/BRUCE by inhibiting its binding to caspases. This chain is Diablo IAP-binding mitochondrial protein, found in Pongo abelii (Sumatran orangutan).